The chain runs to 821 residues: uncharacterized protein (821 aa).

Disordered regions lie at residues 1-20, 55-96, 134-205, 240-263, 274-293, 360-381, 430-450, 467-497, 512-535, and 549-641; these read MGQT…TTSS, SENY…EAYS, SYDF…NNEH, RLHQ…RSSW, PEEF…TPLN, NVLQ…ESNS, TSED…NESR, EFST…SQAF, RNLF…NQPT, and AQEP…SNQT. Composition is skewed to polar residues over residues 58 to 88 and 185 to 203; these read YADT…CSTQ and SLPS…SINN. The segment covering 279–293 has biased composition (polar residues); that stretch reads NASNPEAHSNFTPLN. Over residues 437–450 the composition is skewed to polar residues; that stretch reads TMTQENQSLHNESR. 2 stretches are compositionally biased toward low complexity: residues 517–529 and 568–578; these read TSNS…SSFS and SSLLDSSNSNS. The span at 579-622 shows a compositional bias: polar residues; the sequence is QRPFSTVPSESNVFSRNASGNFSMSQTHQPTTDNTSSFSTQPGR. The RING-type; atypical zinc finger occupies 766-809; sequence CLICLETYTNGDICRKLQACKHFFHQACIDQWLTTGNNSCPLCR.

This is an uncharacterized protein from Schizosaccharomyces pombe (strain 972 / ATCC 24843) (Fission yeast).